The following is a 251-amino-acid chain: 2,3-bisphosphoglycerate-dependent phosphoglycerate mutase (251 aa).

Substrate contacts are provided by residues 13–20 (RHGESEWN), 26–27 (TG), arginine 65, 92–95 (ERHY), lysine 103, 119–120 (RR), and 186–187 (GN). The active-site Tele-phosphohistidine intermediate is histidine 14. Glutamate 92 functions as the Proton donor/acceptor in the catalytic mechanism.

Belongs to the phosphoglycerate mutase family. BPG-dependent PGAM subfamily.

It catalyses the reaction (2R)-2-phosphoglycerate = (2R)-3-phosphoglycerate. Its pathway is carbohydrate degradation; glycolysis; pyruvate from D-glyceraldehyde 3-phosphate: step 3/5. In terms of biological role, catalyzes the interconversion of 2-phosphoglycerate and 3-phosphoglycerate. This Rhodococcus jostii (strain RHA1) protein is 2,3-bisphosphoglycerate-dependent phosphoglycerate mutase.